Consider the following 187-residue polypeptide: Elongation factor P (187 aa).

Belongs to the elongation factor P family.

It is found in the cytoplasm. It participates in protein biosynthesis; polypeptide chain elongation. Its function is as follows. Involved in peptide bond synthesis. Stimulates efficient translation and peptide-bond synthesis on native or reconstituted 70S ribosomes in vitro. Probably functions indirectly by altering the affinity of the ribosome for aminoacyl-tRNA, thus increasing their reactivity as acceptors for peptidyl transferase. This chain is Elongation factor P, found in Rhodococcus jostii (strain RHA1).